The primary structure comprises 640 residues: Threonine--tRNA ligase (640 aa).

Residues 1–61 (MPIITLPNGD…TEDSTLQIIT (61 aa)) enclose the TGS domain. Positions 242–533 (DHRKIGKALD…LIEHYAGFMP (292 aa)) are catalytic. Zn(2+) is bound by residues cysteine 333, histidine 384, and histidine 510.

Belongs to the class-II aminoacyl-tRNA synthetase family. Homodimer. Requires Zn(2+) as cofactor.

It localises to the cytoplasm. It carries out the reaction tRNA(Thr) + L-threonine + ATP = L-threonyl-tRNA(Thr) + AMP + diphosphate + H(+). Its function is as follows. Catalyzes the attachment of threonine to tRNA(Thr) in a two-step reaction: L-threonine is first activated by ATP to form Thr-AMP and then transferred to the acceptor end of tRNA(Thr). Also edits incorrectly charged L-seryl-tRNA(Thr). The polypeptide is Threonine--tRNA ligase (Acinetobacter baumannii (strain AB307-0294)).